The primary structure comprises 1211 residues: Diacylglycerol kinase eta (1211 aa).

A disordered region spans residues Met1–Glu66. Residues Ala19–Gly32 show a composition bias toward low complexity. Polar residues predominate over residues Val52 to Lys61. The 94-residue stretch at Thr62–Ser155 folds into the PH domain. 2 Phorbol-ester/DAG-type zinc fingers span residues Met172–Cys222 and Pro244–Cys295. Positions Phe325–Glu460 constitute a DAGKc domain. Disordered stretches follow at residues Ser562 to Glu613 and Lys634 to Gly694. 2 stretches are compositionally biased toward acidic residues: residues Pro576–Leu589 and Tyr653–Glu662. A compositionally biased stretch (polar residues) spans Ser670–Ser691. In terms of domain architecture, SAM spans Trp1143–Asn1206.

This sequence belongs to the eukaryotic diacylglycerol kinase family. In terms of assembly, interacts with RAF1 and BRAF. Homooligomers. Heterooligomers. Oligomerization through the SAM domain inhibits the diacylglycerol kinase activity. Heterooligomerizes with SAM domain-containing isoforms of DGKD. As to quaternary structure, does not form homooligomers. In terms of processing, phosphorylated. Phosphorylation does not inhibit catalytic activity. In terms of tissue distribution, widely expressed. Detected in the granulosa cells of the primary and secondary follicles. Expressed in mature follicles and corpus lutea. Expressed in the oviductal epithelium. In the uterus, strongly expressed in the luminal epithelium. Detected in the uterine glands. Detected in ovary and uterus (at protein level). As to expression, specifically expressed in testis. Detected in the inner area of the testis. Strongly expressed in the secondary spermatocytes and the round spermatids and weakly detected in the primary spermatocytes.

It localises to the cytoplasm. The protein localises to the cell membrane. The protein resides in the cytoskeleton. It catalyses the reaction a 1,2-diacyl-sn-glycerol + ATP = a 1,2-diacyl-sn-glycero-3-phosphate + ADP + H(+). The enzyme catalyses 1,2-di-(9Z-octadecenoyl)-sn-glycerol + ATP = 1,2-di-(9Z-octadecenoyl)-sn-glycero-3-phosphate + ADP + H(+). The protein operates within lipid metabolism; glycerolipid metabolism. Functionally, diacylglycerol kinase that converts diacylglycerol/DAG into phosphatidic acid/phosphatidate/PA and regulates the respective levels of these two bioactive lipids. Thereby, acts as a central switch between the signaling pathways activated by these second messengers with different cellular targets and opposite effects in numerous biological processes. Plays a key role in promoting cell growth. Activates the Ras/B-Raf/C-Raf/MEK/ERK signaling pathway induced by EGF. Regulates the recruitment of RAF1 and BRAF from cytoplasm to membranes and their heterodimerization. In Mus musculus (Mouse), this protein is Diacylglycerol kinase eta.